We begin with the raw amino-acid sequence, 141 residues long: uncharacterized protein (141 aa).

Residues 1–39 (MNNNNNNNNNNNNNNNNNNNNNNNNNSYDSNHSSSSYTS) are compositionally biased toward low complexity. The segment at 1 to 48 (MNNNNNNNNNNNNNNNNNNNNNNNNNSYDSNHSSSSYTSENQNREQQF) is disordered. Residues 109 to 129 (FFCKIILVFICLVAIYSLVVI) form a helical membrane-spanning segment.

It localises to the membrane. This is an uncharacterized protein from Dictyostelium discoideum (Social amoeba).